The primary structure comprises 224 residues: Dickkopf-related protein 4 (224 aa).

An N-terminal signal peptide occupies residues Met1–Ala18. Positions Cys41–Cys90 are DKK-type Cys-1. The interval Gly109–Gly139 is disordered. Basic residues predominate over residues Lys126–Gly136. 5 disulfides stabilise this stretch: Cys145-Cys157, Cys151-Cys166, Cys156-Cys194, Cys176-Cys202, and Cys196-Cys218. Residues Cys145–Cys218 form a DKK-type Cys-2 region.

The protein belongs to the dickkopf family. As to quaternary structure, interacts with LRP5 and LRP6. Post-translationally, appears to be not glycosylated. Can be proteolytically processed by a furin-like protease. In terms of tissue distribution, expressed in cerebellum, T-cells, esophagus and lung.

It is found in the secreted. In terms of biological role, antagonizes canonical Wnt signaling by inhibiting LRP5/6 interaction with Wnt and by forming a ternary complex with the transmembrane protein KREMEN that promotes internalization of LRP5/6. DKKs play an important role in vertebrate development, where they locally inhibit Wnt regulated processes such as antero-posterior axial patterning, limb development, somitogenesis and eye formation. In the adult, Dkks are implicated in bone formation and bone disease, cancer and Alzheimer disease. The sequence is that of Dickkopf-related protein 4 (DKK4) from Homo sapiens (Human).